Here is a 120-residue protein sequence, read N- to C-terminus: NAD(P)H-quinone oxidoreductase subunit 3, chloroplastic (120 aa).

3 helical membrane-spanning segments follow: residues 9-29 (IFWA…LISG), 64-84 (MFAL…PWAM), and 88-108 (VLGV…ILGL).

It belongs to the complex I subunit 3 family. As to quaternary structure, NDH is composed of at least 16 different subunits, 5 of which are encoded in the nucleus.

It is found in the plastid. The protein localises to the chloroplast thylakoid membrane. The catalysed reaction is a plastoquinone + NADH + (n+1) H(+)(in) = a plastoquinol + NAD(+) + n H(+)(out). The enzyme catalyses a plastoquinone + NADPH + (n+1) H(+)(in) = a plastoquinol + NADP(+) + n H(+)(out). Its function is as follows. NDH shuttles electrons from NAD(P)H:plastoquinone, via FMN and iron-sulfur (Fe-S) centers, to quinones in the photosynthetic chain and possibly in a chloroplast respiratory chain. The immediate electron acceptor for the enzyme in this species is believed to be plastoquinone. Couples the redox reaction to proton translocation, and thus conserves the redox energy in a proton gradient. In Arabidopsis thaliana (Mouse-ear cress), this protein is NAD(P)H-quinone oxidoreductase subunit 3, chloroplastic.